The following is a 385-amino-acid chain: Nonsense-mediated mRNA decay factor SMG9 (385 aa).

Residues 1-32 (MKKVEILKTSRPSSAGGAARPSTASPTHGAPK) are disordered.

Belongs to the SMG9 family.

Functionally, involved in nonsense-mediated decay (NMD) of mRNAs containing premature stop codons. Probable component of kinase complex containing smg-1 and recruited to stalled ribosomes. This is Nonsense-mediated mRNA decay factor SMG9 (smg-9) from Caenorhabditis elegans.